The primary structure comprises 226 residues: PKHD-type hydroxylase Pput_0892 (226 aa).

Positions 78–178 (KVFPPLINCY…RYAAFFWTQS (101 aa)) constitute a Fe2OG dioxygenase domain. Residues H96, D98, and H159 each coordinate Fe cation. R169 contacts 2-oxoglutarate.

Fe(2+) is required as a cofactor. It depends on L-ascorbate as a cofactor.

This is PKHD-type hydroxylase Pput_0892 from Pseudomonas putida (strain ATCC 700007 / DSM 6899 / JCM 31910 / BCRC 17059 / LMG 24140 / F1).